The following is a 907-amino-acid chain: MTQLTVKALSEEIGTPVDRLLEQLADAGMKKSSSDQVSDEEKQKLLTHLKKEHGDTSGDAEPTRLTLQRKTRSTLSVNAGGGKSKDVQIEVRKKRTYVKRSAIEDEAKREAEEAAQREAEEAAKRAAEEAAKREAEEAAKREAEEKAKREAEEAAKREAEKSVDRDAEEKAKRDAEGKAKRDAEEKVKQEAARKEAEELKRRQEEEAKRKAEEESQRKLEEAREMAEKNKERWSAAEENKGDMEDTDYHVTTSQYAREAEDEADRKEEEARRRKKKTKSSAKASENDERGGPRVQRGGKGGRKGKLSKPKSMQHGFDKSAVVAKSDVVIGETIVVSELANKMSVKATEVIKIMMKMGAMATINQVIDQETAQLVAEEMGHKVVLRKENELEEAVLSDRDNMFEAVPRAPVVTIMGHVDHGKTSTLDYIRRTHVASGEAGGITQHIGAYHVETENGMITFLDTPGHAAFTAMRARGAQATDIVVLVVAADDGVMPQTVEAIQHAKAAGVPLIVAVNKIDKEEANPDNVKNELSQYNVMPEEWGGENMFVHISAKQGTNIDQLLETILLQAEVLELTAVKEGMASGVVVESRLDKGRGPVATVLVQSGTLRKGDIVLCGQEYGRVRAMRDEIGNEVNEAGPSIPVEILGLSGVPAAGDEATVVRDERKAREVANYRAGKFREVKLARQQKSKLENMFSNMAAGDVAELNIVLKADVQGSVEAIADSLTKLSTEEVKVNIVGSGVGGITETDAVLAEASNAIILGFNVRADASARRAIEAASIDLRYYSIIYQLIDEVKQAMSGMLAPEFKQEIIGLAEVRDVFKSPKLGAIAGCMVTEGLIKRNAPIRVLRDNVVIYEGELESLRRFKDDVAEVKNGYECGIGVKNYNDVRVGDQIEVFETIEIKRTID.

Residues 26–317 (DAGMKKSSSD…KPKSMQHGFD (292 aa)) are disordered. Basic and acidic residues-rich tracts occupy residues 28 to 44 (GMKK…EKQK) and 101 to 248 (SAIE…DTDY). The segment covering 299 to 308 (KGGRKGKLSK) has biased composition (basic residues). The tr-type G domain occupies 406 to 575 (PRAPVVTIMG…LLQAEVLELT (170 aa)). The segment at 415 to 422 (GHVDHGKT) is G1. 415 to 422 (GHVDHGKT) serves as a coordination point for GTP. The interval 440-444 (GITQH) is G2. The segment at 461 to 464 (DTPG) is G3. GTP-binding positions include 461–465 (DTPGH) and 515–518 (NKID). Positions 515–518 (NKID) are G4. The G5 stretch occupies residues 551–553 (SAK).

The protein belongs to the TRAFAC class translation factor GTPase superfamily. Classic translation factor GTPase family. IF-2 subfamily.

Its subcellular location is the cytoplasm. Functionally, one of the essential components for the initiation of protein synthesis. Protects formylmethionyl-tRNA from spontaneous hydrolysis and promotes its binding to the 30S ribosomal subunits. Also involved in the hydrolysis of GTP during the formation of the 70S ribosomal complex. This chain is Translation initiation factor IF-2, found in Vibrio vulnificus (strain YJ016).